Consider the following 254-residue polypeptide: Adenosylcobinamide-GDP ribazoletransferase (254 aa).

6 helical membrane-spanning segments follow: residues 28 to 48 (FRQT…IVAL), 62 to 81 (IGVY…IDGI), 109 to 129 (VGVG…LGVL), 138 to 158 (VTFI…ALLV), 179 to 199 (LSLF…PYLG), and 200 to 220 (ASPT…IKQW).

Belongs to the CobS family. Requires Mg(2+) as cofactor.

The protein localises to the cell membrane. It catalyses the reaction alpha-ribazole + adenosylcob(III)inamide-GDP = adenosylcob(III)alamin + GMP + H(+). It carries out the reaction alpha-ribazole 5'-phosphate + adenosylcob(III)inamide-GDP = adenosylcob(III)alamin 5'-phosphate + GMP + H(+). It functions in the pathway cofactor biosynthesis; adenosylcobalamin biosynthesis; adenosylcobalamin from cob(II)yrinate a,c-diamide: step 7/7. Joins adenosylcobinamide-GDP and alpha-ribazole to generate adenosylcobalamin (Ado-cobalamin). Also synthesizes adenosylcobalamin 5'-phosphate from adenosylcobinamide-GDP and alpha-ribazole 5'-phosphate. The protein is Adenosylcobinamide-GDP ribazoletransferase of Haloquadratum walsbyi (strain DSM 16790 / HBSQ001).